Here is a 176-residue protein sequence, read N- to C-terminus: NAD(P)H-quinone oxidoreductase subunit 6, chloroplastic (176 aa).

5 consecutive transmembrane segments (helical) span residues 10-30 (ILML…VLLT), 33-53 (IYSA…YFLL), 60-80 (VAQL…AVMF), 95-115 (IGDG…MTTI), and 152-172 (FYLP…GAIT).

This sequence belongs to the complex I subunit 6 family. As to quaternary structure, NDH is composed of at least 16 different subunits, 5 of which are encoded in the nucleus.

Its subcellular location is the plastid. The protein resides in the chloroplast thylakoid membrane. The enzyme catalyses a plastoquinone + NADH + (n+1) H(+)(in) = a plastoquinol + NAD(+) + n H(+)(out). It catalyses the reaction a plastoquinone + NADPH + (n+1) H(+)(in) = a plastoquinol + NADP(+) + n H(+)(out). In terms of biological role, NDH shuttles electrons from NAD(P)H:plastoquinone, via FMN and iron-sulfur (Fe-S) centers, to quinones in the photosynthetic chain and possibly in a chloroplast respiratory chain. The immediate electron acceptor for the enzyme in this species is believed to be plastoquinone. Couples the redox reaction to proton translocation, and thus conserves the redox energy in a proton gradient. This chain is NAD(P)H-quinone oxidoreductase subunit 6, chloroplastic (ndhG), found in Triticum aestivum (Wheat).